The sequence spans 713 residues: Ribosomal RNA large subunit methyltransferase K/L (713 aa).

In terms of domain architecture, THUMP spans 46 to 157; the sequence is TAYRICLWSR…RDQATLSLDL (112 aa).

Belongs to the methyltransferase superfamily. RlmKL family.

The protein localises to the cytoplasm. The catalysed reaction is guanosine(2445) in 23S rRNA + S-adenosyl-L-methionine = N(2)-methylguanosine(2445) in 23S rRNA + S-adenosyl-L-homocysteine + H(+). The enzyme catalyses guanosine(2069) in 23S rRNA + S-adenosyl-L-methionine = N(2)-methylguanosine(2069) in 23S rRNA + S-adenosyl-L-homocysteine + H(+). In terms of biological role, specifically methylates the guanine in position 2445 (m2G2445) and the guanine in position 2069 (m7G2069) of 23S rRNA. This Syntrophotalea carbinolica (strain DSM 2380 / NBRC 103641 / GraBd1) (Pelobacter carbinolicus) protein is Ribosomal RNA large subunit methyltransferase K/L.